The primary structure comprises 596 residues: uncharacterized protein (596 aa).

The disordered stretch occupies residues 1-31 (MSTSNDPVVSSHDPIKQEKEQETDLEAQVEH). Over 1–37 (MSTSNDPVVSSHDPIKQEKEQETDLEAQVEHKKRNER) the chain is Cytoplasmic. Residues 13–22 (DPIKQEKEQE) are compositionally biased toward basic and acidic residues. Residues 38–58 (GNAFVGFLILIFVYYLLRGGS) form a helical membrane-spanning segment. Topologically, residues 59-596 (NDNDKQEMSH…ILVSDSGEEA (538 aa)) are lumenal. Asn-118 is a glycosylation site (N-linked (GlcNAc...) asparagine). His-197 serves as a coordination point for Zn(2+). Asp-199 is a catalytic residue. Asp-232 contributes to the Zn(2+) binding site. Glu-266 serves as the catalytic Proton acceptor. Glu-267 and Asp-295 together coordinate Zn(2+). N-linked (GlcNAc...) asparagine glycosylation is found at Asn-466, Asn-541, and Asn-555. His-565 is a binding site for Zn(2+).

The protein belongs to the peptidase M20A family. Zn(2+) serves as cofactor.

Its subcellular location is the vacuole membrane. This is an uncharacterized protein from Schizosaccharomyces pombe (strain 972 / ATCC 24843) (Fission yeast).